The following is a 517-amino-acid chain: DNA-(apurinic or apyrimidinic site) endonuclease 2 (517 aa).

Residues asparagine 9 and glutamate 34 each contribute to the Mg(2+) site. The Claspin-like CKB motif signature appears at 82-90; it reads EEGLSGVFC. Tyrosine 142 is an active-site residue. Mg(2+) contacts are provided by aspartate 183, asparagine 185, aspartate 299, and histidine 300. Aspartate 183 functions as the Proton donor/acceptor in the catalytic mechanism. Histidine 300 (proton acceptor) is an active-site residue. Positions 347-362 are enriched in polar residues; that stretch reads GNTTEESSELTGTPSF. Positions 347–366 are disordered; that stretch reads GNTTEESSELTGTPSFTEGA. The PCNA interacting protein (PIP) box signature appears at 395 to 402; that stretch reads QGNLLSFF. 4 residues coordinate Zn(2+): cysteine 463, histidine 466, cysteine 489, and cysteine 503. The GRF-type zinc-finger motif lies at 463–512; the sequence is CKGHSEPCVLRTVKKAGPNCGRQFYVCARPEGHSSNPQARCNFFLWLTKK.

Belongs to the DNA repair enzymes AP/ExoA family. In terms of assembly, interacts (via PIP box and GRF-type Zinc finger domain) with pcna; the interaction is required for 3 -5 SSB end resection, assembly of a checkpoint protein complex to SSB sites, and SSB signaling. Interacts with chek1. Mg(2+) serves as cofactor. The cofactor is Mn(2+). In terms of tissue distribution, expressed in eggs (at protein level).

The protein localises to the nucleus. Its subcellular location is the chromosome. It is found in the cytoplasm. It localises to the mitochondrion. It catalyses the reaction Exonucleolytic cleavage in the 3'- to 5'-direction to yield nucleoside 5'-phosphates.. With respect to regulation, 3'-5' nuclease activity is stimulated in presence of pcna. Functionally, functions as a weak apurinic/apyrimidinic (AP) endodeoxyribonuclease in the DNA base excision repair (BER) pathway of DNA lesions induced by oxidative and alkylating agents. Initiates repair of AP sites in DNA by catalyzing hydrolytic incision of the phosphodiester backbone immediately adjacent to the damage, generating a single-strand break with 5'-deoxyribose phosphate and 3'-hydroxyl ends. Exhibits 3'-5' exonuclease activity on a 3' DNA substrate; nuclease activity is stimulated by interaction with pcna. Has a preference for the 3' recessed ends over blunt-ended substrates, in both the presence and the absence of pcna. Generates single-stranded DNA (ssDNA) via 3'-5' single-strand break (SSB) end resection, thereby promoting a DNA damage response via replication protein A (rpa2)-binding to ssDNA and the recruitment of a checkpoint protein complex, including atr, atr-interacting protein atrip, and rad9, to damage sites following oxidative stress. Plays a role in reversing blocked 3' DNA ends, problematic lesions that preclude DNA synthesis. Required for chek1 phosphorylation induced by hydrogen peroxide but not by stalled replication forks. The chain is DNA-(apurinic or apyrimidinic site) endonuclease 2 from Xenopus laevis (African clawed frog).